We begin with the raw amino-acid sequence, 557 residues long: 2-succinyl-5-enolpyruvyl-6-hydroxy-3-cyclohexene-1-carboxylate synthase (557 aa).

It belongs to the TPP enzyme family. MenD subfamily. As to quaternary structure, homodimer. The cofactor is Mg(2+). Requires Mn(2+) as cofactor. It depends on thiamine diphosphate as a cofactor.

It catalyses the reaction isochorismate + 2-oxoglutarate + H(+) = 5-enolpyruvoyl-6-hydroxy-2-succinyl-cyclohex-3-ene-1-carboxylate + CO2. The protein operates within quinol/quinone metabolism; 1,4-dihydroxy-2-naphthoate biosynthesis; 1,4-dihydroxy-2-naphthoate from chorismate: step 2/7. It participates in quinol/quinone metabolism; menaquinone biosynthesis. Its function is as follows. Catalyzes the thiamine diphosphate-dependent decarboxylation of 2-oxoglutarate and the subsequent addition of the resulting succinic semialdehyde-thiamine pyrophosphate anion to isochorismate to yield 2-succinyl-5-enolpyruvyl-6-hydroxy-3-cyclohexene-1-carboxylate (SEPHCHC). The polypeptide is 2-succinyl-5-enolpyruvyl-6-hydroxy-3-cyclohexene-1-carboxylate synthase (Staphylococcus aureus (strain Mu3 / ATCC 700698)).